The chain runs to 642 residues: Threonine--tRNA ligase (642 aa).

The 61-residue stretch at methionine 1 to threonine 61 folds into the TGS domain. Positions aspartate 244 to proline 535 are catalytic. Positions 335, 386, and 512 each coordinate Zn(2+).

This sequence belongs to the class-II aminoacyl-tRNA synthetase family. In terms of assembly, homodimer. The cofactor is Zn(2+).

It localises to the cytoplasm. The enzyme catalyses tRNA(Thr) + L-threonine + ATP = L-threonyl-tRNA(Thr) + AMP + diphosphate + H(+). In terms of biological role, catalyzes the attachment of threonine to tRNA(Thr) in a two-step reaction: L-threonine is first activated by ATP to form Thr-AMP and then transferred to the acceptor end of tRNA(Thr). Also edits incorrectly charged L-seryl-tRNA(Thr). The sequence is that of Threonine--tRNA ligase from Vibrio cholerae serotype O1 (strain ATCC 39541 / Classical Ogawa 395 / O395).